The chain runs to 215 residues: Thymidylate kinase (215 aa).

An ATP-binding site is contributed by 12–19; the sequence is GLEGAGKT.

It belongs to the thymidylate kinase family.

It catalyses the reaction dTMP + ATP = dTDP + ADP. In terms of biological role, phosphorylation of dTMP to form dTDP in both de novo and salvage pathways of dTTP synthesis. In Halorhodospira halophila (strain DSM 244 / SL1) (Ectothiorhodospira halophila (strain DSM 244 / SL1)), this protein is Thymidylate kinase.